Reading from the N-terminus, the 402-residue chain is Multidrug resistance protein MdtH (402 aa).

A run of 11 helical transmembrane segments spans residues 13–33 (YFLLIDNMLVVLGFFVVFPLI), 34–54 (SIRFVDSLGWAALMVGIALGL), 99–116 (PWVLWLSCVLSGLGGTLF), 139–159 (LLMMQDSAGAVTGALIGSWLL), 165–185 (LVCGVGALLFVLCAGFNAWLL), 214–234 (VLTLTGYYMLAVQVMLMLPVM), 243–263 (AAVKWMYAIEAVLSLTLLYPL), 277–297 (LMAGLLVMTFSLVPIGLASNL), 300–320 (LFTLICLFYIGSIIAEPARET), 340–360 (LGLAFGGALGYAGGGWLFDAG), and 368–388 (LPWAMLGVIGVGTFLMLWWQF).

This sequence belongs to the major facilitator superfamily. DHA1 family. MdtH (TC 2.A.1.2.21) subfamily.

The protein localises to the cell inner membrane. This is Multidrug resistance protein MdtH from Cronobacter sakazakii (strain ATCC BAA-894) (Enterobacter sakazakii).